A 329-amino-acid chain; its full sequence is Haptoglobin (329 aa).

N-linked (GlcNAc...) asparagine glycosylation occurs at N9. Residues V13 to A70 enclose the Sushi domain. Intrachain disulfides connect C34–C68 and C72–C189. A propeptide is located at residue R84. The Peptidase S1 domain maps to I85–A327. N107 and N214 each carry an N-linked (GlcNAc...) asparagine glycan. Intrachain disulfides connect C232–C263 and C274–C304. An interaction with CD163 region spans residues V241–S246.

This sequence belongs to the peptidase S1 family. Tetramer of two alpha and two beta chains; disulfide-linked. The hemoglobin/haptoglobin complex is composed of a haptoglobin dimer bound to two hemoglobin alpha-beta dimers. Interacts with CD163. Interacts with ERGIC3. Expressed by the liver and secreted in plasma.

Its subcellular location is the secreted. It is found in the extracellular space. As a result of hemolysis, hemoglobin is found to accumulate in the kidney and is secreted in the urine. Haptoglobin captures, and combines with free plasma hemoglobin to allow hepatic recycling of heme iron and to prevent kidney damage. Haptoglobin also acts as an antioxidant, has antibacterial activity and plays a role in modulating many aspects of the acute phase response. Hemoglobin/haptoglobin complexes are rapidly cleared by the macrophage CD163 scavenger receptor expressed on the surface of liver Kupfer cells through an endocytic lysosomal degradation pathway. The polypeptide is Haptoglobin (HP) (Canis lupus familiaris (Dog)).